The following is a 563-amino-acid chain: Kelch repeat and BTB domain-containing protein 1 (563 aa).

Residues 21–88 enclose the BTB domain; sequence CDINIVINDE…IYGIPLSLTN (68 aa). Residues 123-219 enclose the BACK domain; it reads CIDFYIYADK…SLLSPQVIKS (97 aa). 6 Kelch repeats span residues 252-297, 298-346, 347-395, 397-441, 442-492, and 494-540; these read IELI…VMDN, IIYM…VDDE, YIYC…MLNG, IYVI…VHAG, KIYI…SVHN, and LYVG…PIKH.

In terms of assembly, interacts (via BTB domain) with host CUL3.

It is found in the host cytoplasm. In terms of biological role, probable substrate-specific adapter of CUL3-containing E3 ubiquitin-protein ligases which mediate the ubiquitination and subsequent proteasomal degradation of host target proteins. The sequence is that of Kelch repeat and BTB domain-containing protein 1 (KBTB1) from Mus musculus (Mouse).